The sequence spans 344 residues: Beta-1,4-galactosyltransferase 4 (344 aa).

The Cytoplasmic portion of the chain corresponds to 1–12; it reads MGCNPPYLLPYR. A helical; Signal-anchor for type II membrane protein membrane pass occupies residues 13 to 38; it reads LRLLLFFTLCLTVVGWVTSNYFVDPI. The Lumenal segment spans residues 39–344; sequence QVIPKAKVFM…NITVDFWTGV (306 aa). Cysteines 77 and 118 form a disulfide. UDP-alpha-D-galactose-binding positions include 129 to 133, 168 to 170, and 195 to 196; these read PHRNR, FNR, and VD. Residues C189 and C208 are joined by a disulfide bond. Mn(2+) is bound at residue D196. N220 carries N-linked (GlcNAc...) asparagine glycosylation. Residues Y224 and W256 each coordinate UDP-alpha-D-galactose. Residue 258–261 participates in N-acetyl-D-glucosamine binding; the sequence is GEDD. H289 contacts Mn(2+). 289–291 is a binding site for UDP-alpha-D-galactose; the sequence is HTR. Residue R301 participates in N-acetyl-D-glucosamine binding. N-linked (GlcNAc...) asparagine glycosylation is present at N335.

This sequence belongs to the glycosyltransferase 7 family. Mn(2+) is required as a cofactor.

The protein resides in the golgi apparatus. The protein localises to the golgi stack membrane. It catalyses the reaction N-acetyl-D-glucosamine + UDP-alpha-D-galactose = beta-D-galactosyl-(1-&gt;4)-N-acetyl-D-glucosamine + UDP + H(+). It carries out the reaction a beta-D-GlcNAc-(1-&gt;3)-beta-D-Gal-(1-&gt;4)-beta-D-Glc-(1&lt;-&gt;1)-Cer(d18:1(4E)) + UDP-alpha-D-galactose = a neolactoside nLc4Cer(d18:1(4E)) + UDP + H(+). Its pathway is protein modification; protein glycosylation. Functionally, galactose (Gal) transferase involved in the biosynthesis of glycoproteins, proteoglycans, and glycosyphingolipids. Catalyzes the transfer of Gal residue via a beta1-&gt;4 linkage from UDP-Gal to the non-reducing terminal N-acetyl glucosamine 6-O-sulfate (6-O-sulfoGlcNAc) in the linearly growing chain of both N- and O-linked keratan sulfate proteoglycans. Cooperates with B3GNT7 N-acetyl glucosamine transferase and CHST6 and CHST1 sulfotransferases to construct and elongate mono- and disulfated disaccharide units [-&gt;3Galbeta1-&gt;4(6-sulfoGlcNAcbeta)1-&gt;] and [-&gt;3(6-sulfoGalbeta)1-&gt;4(6-sulfoGlcNAcbeta)1-&gt;] within keratan sulfate polymer. This Cricetulus griseus (Chinese hamster) protein is Beta-1,4-galactosyltransferase 4 (B4GALT4).